The primary structure comprises 711 residues: Putative DNA topoisomerase 3 (711 aa).

One can recognise a Toprim domain in the interval 2 to 135 (KYLILAEKPS…LRRLWISSVT (134 aa)). Positions 8 and 104 each coordinate Mg(2+). In terms of domain architecture, Topo IA-type catalytic spans 152 to 580 (YNDLYYAALA…EMKGFTKDVV (429 aa)). The tract at residues 186–191 (SLGRVQ) is interaction with DNA. Y305 functions as the O-(5'-phospho-DNA)-tyrosine intermediate in the catalytic mechanism. The disordered stretch occupies residues 691–711 (MNKNEGLDNNPFKDALKNLNL).

Belongs to the type IA topoisomerase family. Mg(2+) is required as a cofactor.

It carries out the reaction ATP-independent breakage of single-stranded DNA, followed by passage and rejoining.. Its function is as follows. Releases the supercoiling and torsional tension of DNA, which is introduced during the DNA replication and transcription, by transiently cleaving and rejoining one strand of the DNA duplex. Introduces a single-strand break via transesterification at a target site in duplex DNA. The scissile phosphodiester is attacked by the catalytic tyrosine of the enzyme, resulting in the formation of a DNA-(5'-phosphotyrosyl)-enzyme intermediate and the expulsion of a 3'-OH DNA strand. The free DNA strand then undergoes passage around the unbroken strand, thus removing DNA supercoils. Finally, in the religation step, the DNA 3'-OH attacks the covalent intermediate to expel the active-site tyrosine and restore the DNA phosphodiester backbone. This Staphylococcus aureus (strain bovine RF122 / ET3-1) protein is Putative DNA topoisomerase 3.